A 962-amino-acid chain; its full sequence is Probable transport protein MmpL9 (962 aa).

The next 12 membrane-spanning stretches (helical) occupy residues L25–V45, L201–T223, L225–Y247, F256–L276, A302–A322, A335–I355, W383–P403, Y768–I788, L796–I816, F820–V840, A867–A887, and R895–V915.

Belongs to the resistance-nodulation-cell division (RND) (TC 2.A.6) family. MmpL subfamily.

The protein resides in the cell membrane. In Mycobacterium tuberculosis (strain ATCC 25618 / H37Rv), this protein is Probable transport protein MmpL9 (mmpL9).